The following is a 642-amino-acid chain: Probable malate:quinone oxidoreductase (642 aa).

Residues 1–142 (MIVVFRHEST…TTRGDKRKLN (142 aa)) are unknown. Positions 143-642 (MSDSPKNAQK…TQKTLKLEKA (500 aa)) are MQO domain.

In the C-terminal section; belongs to the MQO family. FAD is required as a cofactor.

The catalysed reaction is (S)-malate + a quinone = a quinol + oxaloacetate. The protein operates within carbohydrate metabolism; tricarboxylic acid cycle; oxaloacetate from (S)-malate (quinone route): step 1/1. This is Probable malate:quinone oxidoreductase (mqo) from Corynebacterium efficiens (strain DSM 44549 / YS-314 / AJ 12310 / JCM 11189 / NBRC 100395).